The primary structure comprises 199 residues: Ubiquitin-conjugating enzyme E2-22 kDa (199 aa).

One can recognise a UBC core domain in the interval 4-154 (MAVSRIKREF…AKHWTNAYAG (151 aa)). Cysteine 92 serves as the catalytic Glycyl thioester intermediate. The UBA domain maps to 161-199 (DCDSKIQRLRDMGIDEHEARAVLSKENWNLEKATEGLFS).

The protein belongs to the ubiquitin-conjugating enzyme family. Interacts with Rpn10. During gastrulation, expression is highest in the invaginating posterior midgut primordium (PMG), high expression is also observed in the cephalic furrow and ventral ectodermal neurogenic region. In stage 10-11 embryos, expression is high in the pole cells present in the pocket formed by the PMG. During germ band retraction, expression appears to reinitiate in many tissues, especially the gut and nervous system. After dorsal closure, expression is detectable at low levels throughout the embryo.

It carries out the reaction S-ubiquitinyl-[E1 ubiquitin-activating enzyme]-L-cysteine + [E2 ubiquitin-conjugating enzyme]-L-cysteine = [E1 ubiquitin-activating enzyme]-L-cysteine + S-ubiquitinyl-[E2 ubiquitin-conjugating enzyme]-L-cysteine.. The protein operates within protein modification; protein ubiquitination. Functionally, catalyzes the covalent attachment of ubiquitin to other proteins. The protein is Ubiquitin-conjugating enzyme E2-22 kDa of Drosophila melanogaster (Fruit fly).